The chain runs to 382 residues: Protein PEP-RELATED DEVELOPMENT ARRESTED 1 homolog, chloroplastic (382 aa).

A chloroplast-targeting transit peptide spans 1-44 (MAILPLSISHSLTSALSATSSGIGRPVARLLHPRVPSRPTVICL).

The protein localises to the plastid. The protein resides in the chloroplast stroma. Its subcellular location is the chloroplast nucleoid. Functionally, plays an essential role in early steps of chloroplast development. May be involved in the redox control of plastid gene expression by maintening the redox state around chloroplast nucleoids. May positively regulate plastid-encoded RNA polymerase (PEP) activity. The chain is Protein PEP-RELATED DEVELOPMENT ARRESTED 1 homolog, chloroplastic from Oryza sativa subsp. japonica (Rice).